A 285-amino-acid polypeptide reads, in one-letter code: HTH-type transcriptional regulator MurR (285 aa).

The region spanning 1–77 (MLYLTKISNA…MALIGEYSAS (77 aa)) is the HTH rpiR-type domain. Positions 37-56 (SRQMAKQLGISQSSIVKFAQ) form a DNA-binding region, H-T-H motif. Residues 128–268 (IIEVISKAPF…FVGLVQLNDV (141 aa)) enclose the SIS domain.

Homotetramer.

The protein operates within amino-sugar metabolism; N-acetylmuramate degradation [regulation]. In terms of biological role, represses the expression of the murPQ operon involved in the uptake and degradation of N-acetylmuramic acid (MurNAc). Binds to two adjacent inverted repeats within the operator region. MurNAc 6-phosphate, the substrate of MurQ, is the specific inducer that weakens binding of MurR to the operator. The polypeptide is HTH-type transcriptional regulator MurR (Escherichia coli O139:H28 (strain E24377A / ETEC)).